We begin with the raw amino-acid sequence, 334 residues long: MASQASLKLQPSNQSQQAPPNITSCEGAPEAWDLLCRVLPGFVITVCFFGLLGNLLVLSFFLLPWRRWWQQRRQRLTIAEIYLANLAASDLVFVLGLPFWAENVGNRFNWPFGSDLCRVVSGVIKANLFISIFLVVAISQDRYRLLVYPMTSWGNRRRRQAQVTCLLIWVAGGLLSTPTFLLRSVKVVPDLNISACILLFPHEAWHFVRMVELNVLGFLLPLAAILYFNFHILASLRGQKEASRTRCGGPKDSKTMGLILTLVASFLVCWAPYHFFAFLDFLVQVRVIQDCFWKELTDLGLQLANFFAFVNSCLNPLIYVFAGRLFKTRVLGTL.

The disordered stretch occupies residues 1–21; the sequence is MASQASLKLQPSNQSQQAPPN. Over 1-41 the chain is Extracellular; it reads MASQASLKLQPSNQSQQAPPNITSCEGAPEAWDLLCRVLPG. The span at 10–21 shows a compositional bias: low complexity; it reads QPSNQSQQAPPN. N-linked (GlcNAc...) asparagine glycosylation is found at Asn13 and Asn21. Residues 42 to 62 traverse the membrane as a helical segment; it reads FVITVCFFGLLGNLLVLSFFL. The Cytoplasmic segment spans residues 63-80; it reads LPWRRWWQQRRQRLTIAE. A helical membrane pass occupies residues 81-101; that stretch reads IYLANLAASDLVFVLGLPFWA. At 102–118 the chain is on the extracellular side; the sequence is ENVGNRFNWPFGSDLCR. Residues Cys117 and Cys196 are joined by a disulfide bond. The chain crosses the membrane as a helical span at residues 119–139; that stretch reads VVSGVIKANLFISIFLVVAIS. Topologically, residues 140–161 are cytoplasmic; the sequence is QDRYRLLVYPMTSWGNRRRRQA. The helical transmembrane segment at 162-182 threads the bilayer; the sequence is QVTCLLIWVAGGLLSTPTFLL. At 183 to 214 the chain is on the extracellular side; the sequence is RSVKVVPDLNISACILLFPHEAWHFVRMVELN. Asn192 carries N-linked (GlcNAc...) asparagine glycosylation. A helical transmembrane segment spans residues 215–235; sequence VLGFLLPLAAILYFNFHILAS. The Cytoplasmic segment spans residues 236 to 258; sequence LRGQKEASRTRCGGPKDSKTMGL. A helical transmembrane segment spans residues 259-279; it reads ILTLVASFLVCWAPYHFFAFL. At 280 to 302 the chain is on the extracellular side; sequence DFLVQVRVIQDCFWKELTDLGLQ. The helical transmembrane segment at 303-323 threads the bilayer; it reads LANFFAFVNSCLNPLIYVFAG. Residues 324-334 are Cytoplasmic-facing; sequence RLFKTRVLGTL.

This sequence belongs to the G-protein coupled receptor 1 family. Bradykinin receptor subfamily. BDKRB1 sub-subfamily. In terms of tissue distribution, expressed in heart, liver and lung.

The protein resides in the cell membrane. Its function is as follows. This is a receptor for bradykinin. Could be a factor in chronic pain and inflammation. The protein is B1 bradykinin receptor (Bdkrb1) of Mus musculus (Mouse).